Here is a 122-residue protein sequence, read N- to C-terminus: Large ribosomal subunit protein uL18 (122 aa).

Belongs to the universal ribosomal protein uL18 family. Part of the 50S ribosomal subunit; part of the 5S rRNA/L5/L18/L25 subcomplex. Contacts the 5S and 23S rRNAs.

This is one of the proteins that bind and probably mediate the attachment of the 5S RNA into the large ribosomal subunit, where it forms part of the central protuberance. This is Large ribosomal subunit protein uL18 from Heliobacterium modesticaldum (strain ATCC 51547 / Ice1).